The following is a 26-amino-acid chain: Coenzyme PQQ synthesis protein A (26 aa).

Positions 16-20 form a cross-link, pyrroloquinoline quinone (Glu-Tyr); that stretch reads EINMY.

This sequence belongs to the PqqA family.

Its pathway is cofactor biosynthesis; pyrroloquinoline quinone biosynthesis. Required for coenzyme pyrroloquinoline quinone (PQQ) biosynthesis. PQQ is probably formed by cross-linking a specific glutamate to a specific tyrosine residue and excising these residues from the peptide. The sequence is that of Coenzyme PQQ synthesis protein A from Cereibacter sphaeroides (strain ATCC 17029 / ATH 2.4.9) (Rhodobacter sphaeroides).